The sequence spans 329 residues: Ketol-acid reductoisomerase (NADP(+)) (329 aa).

Positions valine 2–threonine 182 constitute a KARI N-terminal Rossmann domain. NADP(+) contacts are provided by residues tyrosine 25–glutamine 28, serine 51, and serine 53. The active site involves histidine 108. Position 134 (glycine 134) interacts with NADP(+). Positions threonine 183 to isoleucine 328 constitute a KARI C-terminal knotted domain. Residues aspartate 191, glutamate 195, glutamate 227, and glutamate 231 each coordinate Mg(2+). Serine 252 contacts substrate.

The protein belongs to the ketol-acid reductoisomerase family. It depends on Mg(2+) as a cofactor.

The enzyme catalyses (2R)-2,3-dihydroxy-3-methylbutanoate + NADP(+) = (2S)-2-acetolactate + NADPH + H(+). It carries out the reaction (2R,3R)-2,3-dihydroxy-3-methylpentanoate + NADP(+) = (S)-2-ethyl-2-hydroxy-3-oxobutanoate + NADPH + H(+). It functions in the pathway amino-acid biosynthesis; L-isoleucine biosynthesis; L-isoleucine from 2-oxobutanoate: step 2/4. Its pathway is amino-acid biosynthesis; L-valine biosynthesis; L-valine from pyruvate: step 2/4. Functionally, involved in the biosynthesis of branched-chain amino acids (BCAA). Catalyzes an alkyl-migration followed by a ketol-acid reduction of (S)-2-acetolactate (S2AL) to yield (R)-2,3-dihydroxy-isovalerate. In the isomerase reaction, S2AL is rearranged via a Mg-dependent methyl migration to produce 3-hydroxy-3-methyl-2-ketobutyrate (HMKB). In the reductase reaction, this 2-ketoacid undergoes a metal-dependent reduction by NADPH to yield (R)-2,3-dihydroxy-isovalerate. The sequence is that of Ketol-acid reductoisomerase (NADP(+)) from Frankia casuarinae (strain DSM 45818 / CECT 9043 / HFP020203 / CcI3).